The sequence spans 66 residues: Large ribosomal subunit protein uL29 (66 aa).

This sequence belongs to the universal ribosomal protein uL29 family.

The polypeptide is Large ribosomal subunit protein uL29 (Lachnospira eligens (strain ATCC 27750 / DSM 3376 / VPI C15-48 / C15-B4) (Eubacterium eligens)).